The primary structure comprises 197 residues: Rac-like GTP-binding protein 5 (197 aa).

Position 13–20 (13–20) interacts with GTP; sequence GDGAVGKT. The short motif at 35–43 is the Effector region element; it reads YVPTVFDNF. GTP contacts are provided by residues 60–64 and 118–121; these read DTAGQ and TKLD. Position 194 is a cysteine methyl ester (Cys194). Cys194 carries the S-geranylgeranyl cysteine lipid modification. Residues 195-197 constitute a propeptide, removed in mature form; it reads AIL.

This sequence belongs to the small GTPase superfamily. Rho family.

Its subcellular location is the cytoplasm. The protein resides in the membrane. Inactive GDP-bound Rho GTPases reside in the cytosol, are found in a complex with Rho GDP-dissociation inhibitors (Rho GDIs), and are released from the GDI protein in order to translocate to membranes upon activation. This Oryza sativa subsp. japonica (Rice) protein is Rac-like GTP-binding protein 5 (RAC5).